A 187-amino-acid chain; its full sequence is MNLQHHFLIAMPALQDPIFRRSVVYICEHNTNGAMGIIVNKPLENLKIEGILEKLKITPEPRDESIRLDKPVMLGGPLAEDRGFILHTPPSNFASSIRISDNTVMTTSRDVLETLGTDKQPSDVLVALGYASWEKGQLEQEILDNAWLTAPADLNILFKTPIADRWRDAAKLIGVDILTMPGVAGHA.

This sequence belongs to the UPF0301 (AlgH) family.

In Escherichia coli O127:H6 (strain E2348/69 / EPEC), this protein is UPF0301 protein YqgE.